Here is a 471-residue protein sequence, read N- to C-terminus: Elongation factor 1-alpha (471 aa).

The tr-type G domain occupies 10 to 239 (KPRLNACFIG…EALNYQDVPE (230 aa)). Residues 19-26 (GHVDSGKS) are G1. 19–26 (GHVDSGKS) is a GTP binding site. Residues 75 to 79 (GITIT) form a G2 region. The G3 stretch occupies residues 96 to 99 (DCPG). Residues 96–100 (DCPGH) and 156–159 (NKMD) each bind GTP. The interval 156–159 (NKMD) is G4. Residues 196-198 (SAF) form a G5 region.

Belongs to the TRAFAC class translation factor GTPase superfamily. Classic translation factor GTPase family. EF-Tu/EF-1A subfamily. As to quaternary structure, component of the eukaryotic elongation factor 1 complex (eEF1).

The protein resides in the cytoplasm. It functions in the pathway protein biosynthesis; polypeptide chain elongation. Functionally, GTP-binding component of the eukaryotic elongation factor 1 complex (eEF1). In its active GTP-bound form, binds to and delivers aminoacyl-tRNA to the A-site of ribosomes during protein biosynthesis. In the presence of a correct codon-anticodon match between the aminoacyl-tRNA and the A-site codon of the ribosome-bound mRNA, the ribosome acts as a GTPase activator and the GTP is hydrolyzed. The inactive GDP-bound form leaves the ribosome and must be recycled by its guanine nucleotide exchange factor (GEF) (eEF1B subcomplex) before binding another molecule of aminoacyl-tRNA. Required for nuclear export of aminoacyl-tRNAs. May also be involved in translational quality control by targeting cotranslationally damaged proteins to the proteasome. The chain is Elongation factor 1-alpha (TEF1) from Encephalitozoon cuniculi (strain GB-M1) (Microsporidian parasite).